A 173-amino-acid polypeptide reads, in one-letter code: NADH-ubiquinone oxidoreductase chain 6 (173 aa).

4 consecutive transmembrane segments (helical) span residues Ala24–Val44, Phe47–Tyr67, Met81–Phe101, and Leu142–Thr162.

The protein belongs to the complex I subunit 6 family.

The protein localises to the mitochondrion membrane. It carries out the reaction a ubiquinone + NADH + 5 H(+)(in) = a ubiquinol + NAD(+) + 4 H(+)(out). Functionally, core subunit of the mitochondrial membrane respiratory chain NADH dehydrogenase (Complex I) that is believed to belong to the minimal assembly required for catalysis. Complex I functions in the transfer of electrons from NADH to the respiratory chain. The immediate electron acceptor for the enzyme is believed to be ubiquinone. The chain is NADH-ubiquinone oxidoreductase chain 6 from Aedes aegypti (Yellowfever mosquito).